Consider the following 81-residue polypeptide: Photosystem I iron-sulfur center (81 aa).

2 consecutive 4Fe-4S ferredoxin-type domains span residues 2–31 and 37–68; these read SHTV…MVPW and GQIA…VRVY. Residues cysteine 11, cysteine 14, cysteine 17, cysteine 21, cysteine 48, cysteine 51, cysteine 54, and cysteine 58 each contribute to the [4Fe-4S] cluster site.

The eukaryotic PSI reaction center is composed of at least 11 subunits. [4Fe-4S] cluster serves as cofactor.

The protein resides in the plastid. It localises to the chloroplast thylakoid membrane. It catalyses the reaction reduced [plastocyanin] + hnu + oxidized [2Fe-2S]-[ferredoxin] = oxidized [plastocyanin] + reduced [2Fe-2S]-[ferredoxin]. In terms of biological role, apoprotein for the two 4Fe-4S centers FA and FB of photosystem I (PSI); essential for photochemical activity. FB is the terminal electron acceptor of PSI, donating electrons to ferredoxin. The C-terminus interacts with PsaA/B/D and helps assemble the protein into the PSI complex. Required for binding of PsaD and PsaE to PSI. PSI is a plastocyanin/cytochrome c6-ferredoxin oxidoreductase, converting photonic excitation into a charge separation, which transfers an electron from the donor P700 chlorophyll pair to the spectroscopically characterized acceptors A0, A1, FX, FA and FB in turn. In Thalassiosira pseudonana (Marine diatom), this protein is Photosystem I iron-sulfur center.